Consider the following 1224-residue polypeptide: Serine/threonine-protein kinase CST20 (1224 aa).

Residues 1–18 are compositionally biased toward polar residues; the sequence is MSILSENNPTPTSITDPN. 2 disordered regions span residues 1–378 and 403–464; these read MSIL…TAHN and TNSS…HSQE. Low complexity-rich tracts occupy residues 57–70 and 95–119; these read NTTS…SLGS and DSGS…NPES. Over residues 144-155 the composition is skewed to basic and acidic residues; it reads HQGDDSDNEKQY. Polar residues-rich tracts occupy residues 169 to 191, 201 to 218, and 231 to 240; these read DSYS…NNVS, TSSL…NENA, and PTSKTSSFHD. The segment covering 242 to 251 has biased composition (low complexity); that stretch reads SSVISSSTSV. Polar residues-rich tracts occupy residues 256–271 and 305–324; these read SNPT…SYKS and DTLS…TLQG. 2 stretches are compositionally biased toward low complexity: residues 343-375 and 433-462; these read NTSA…STST and KVRG…NSHS. The CRIB domain occupies 469–482; that stretch reads ISTPFNAKHLAHVG. 2 disordered regions span residues 539–825 and 861–913; these read FHFD…ALAD and LREK…KQAA. A compositionally biased stretch (polar residues) spans 544–555; sequence NKSSSSGWSNEN. Residues 564 to 575 are compositionally biased toward gly residues; the sequence is SNSGSGSGGGGA. Residues 598–607 are compositionally biased toward polar residues; the sequence is ITPSQSMPTK. Over residues 608 to 622 the composition is skewed to basic and acidic residues; sequence TESKQSENQHPHEDN. Over residues 623–636 the composition is skewed to polar residues; sequence ATQYTPRTPTSHVQ. Low complexity-rich tracts occupy residues 664-677, 690-704, and 730-743; these read PSSQ…SQSD, SPSK…SKSL, and SIPK…SLSS. The segment covering 744–755 has biased composition (polar residues); that stretch reads QLRPATNGSTTA. Over residues 783–801 the composition is skewed to pro residues; it reads APPPPPSAPPAPPVPPAPP. Residues 805 to 820 show a composition bias toward polar residues; sequence LSEQTSEIPQQRTAPS. Residues 861–870 are compositionally biased toward basic and acidic residues; it reads LREKNERQNR. Positions 871 to 886 are enriched in polar residues; it reads QQETGQNNADTASGGS. A Protein kinase domain is found at 947 to 1199; that stretch reads YVDLVKIGQG…ADELLHDNFI (253 aa). ATP-binding positions include 953 to 961 and Lys-977; that span reads IGQGASGGV. Asp-1067 (proton acceptor) is an active-site residue.

This sequence belongs to the protein kinase superfamily. STE Ser/Thr protein kinase family. STE20 subfamily.

The protein localises to the cytoplasm. It is found in the nucleus. The catalysed reaction is L-seryl-[protein] + ATP = O-phospho-L-seryl-[protein] + ADP + H(+). It carries out the reaction L-threonyl-[protein] + ATP = O-phospho-L-threonyl-[protein] + ADP + H(+). In terms of biological role, MAP4K component of the MAPK pathway required for the mating pheromone response, and the regulation of cell polarity and cell cycle. Phosphorylates histone H2B to form H2BS10ph. Required for hyphal formation and virulence. The chain is Serine/threonine-protein kinase CST20 (CST20) from Candida albicans (strain WO-1) (Yeast).